The sequence spans 412 residues: Translation initiation factor 2 subunit gamma (412 aa).

One can recognise a tr-type G domain in the interval 8-205 (QAEMNIGMVG…AMYEHFEPPE (198 aa)). The G1 stretch occupies residues 17–24 (GHVDHGKT). Mg(2+)-binding residues include Asp20, Thr24, Gly45, and Ser47. Residue 20–25 (DHGKTT) coordinates GTP. Positions 45–49 (GISIR) are G2. 4 residues coordinate Zn(2+): Cys60, Cys63, Cys72, and Cys75. The segment at 89 to 92 (DSPG) is G3. GTP contacts are provided by residues 145-148 (NKID) and 183-185 (SAQ). The segment at 145–148 (NKID) is G4. The tract at residues 183-185 (SAQ) is G5.

This sequence belongs to the TRAFAC class translation factor GTPase superfamily. Classic translation factor GTPase family. EIF2G subfamily. As to quaternary structure, heterotrimer composed of an alpha, a beta and a gamma chain. It depends on Mg(2+) as a cofactor.

It carries out the reaction GTP + H2O = GDP + phosphate + H(+). In terms of biological role, eIF-2 functions in the early steps of protein synthesis by forming a ternary complex with GTP and initiator tRNA. The polypeptide is Translation initiation factor 2 subunit gamma (Methanopyrus kandleri (strain AV19 / DSM 6324 / JCM 9639 / NBRC 100938)).